A 111-amino-acid chain; its full sequence is UPF0145 protein BTH_I2656 (111 aa).

Belongs to the UPF0145 family.

In Burkholderia thailandensis (strain ATCC 700388 / DSM 13276 / CCUG 48851 / CIP 106301 / E264), this protein is UPF0145 protein BTH_I2656.